Consider the following 129-residue polypeptide: Phosphoribosyl-AMP cyclohydrolase (129 aa).

Residue D82 participates in Mg(2+) binding. C83 serves as a coordination point for Zn(2+). 2 residues coordinate Mg(2+): D84 and D86. 2 residues coordinate Zn(2+): C99 and C106.

The protein belongs to the PRA-CH family. Homodimer. Mg(2+) serves as cofactor. The cofactor is Zn(2+).

It localises to the cytoplasm. The enzyme catalyses 1-(5-phospho-beta-D-ribosyl)-5'-AMP + H2O = 1-(5-phospho-beta-D-ribosyl)-5-[(5-phospho-beta-D-ribosylamino)methylideneamino]imidazole-4-carboxamide. Its pathway is amino-acid biosynthesis; L-histidine biosynthesis; L-histidine from 5-phospho-alpha-D-ribose 1-diphosphate: step 3/9. In terms of biological role, catalyzes the hydrolysis of the adenine ring of phosphoribosyl-AMP. The protein is Phosphoribosyl-AMP cyclohydrolase of Methanosarcina barkeri (strain Fusaro / DSM 804).